The chain runs to 252 residues: MQLTRCCFVFLVQGSLYLVICGQDDGPPGSEDPEHDDHEGQPRPRVPRKRGHISPKSRPLANSTLLGLLAPPGEVWGVLGQPPNRPKQSPLPSTKVKKIFGWGDFYSNIKTVALNLLVTGKIVDHGNGTFSVHFRHNATGQGNISISLVPPSKAVEFHQEQQIFIEAKASKIFNCRMEWEKVERGRRTSLCTHDPAKICSRDHAQSSATWSCSQPFKVVCVYIAFYSTDYRLVQKVCPDYNYHSDTPYYPSG.

An N-terminal signal peptide occupies residues 1–22; the sequence is MQLTRCCFVFLVQGSLYLVICG. The interval 23 to 75 is II; it reads QDDGPPGSEDPEHDDHEGQPRPRVPRKRGHISPKSRPLANSTLLGLLAPPGEV. The segment at 27–59 is disordered; it reads PPGSEDPEHDDHEGQPRPRVPRKRGHISPKSRP. Basic residues predominate over residues 45 to 55; the sequence is RVPRKRGHISP. 4 N-linked (GlcNAc...) asparagine glycosylation sites follow: Asn-62, Asn-127, Asn-137, and Asn-143. The interval 76–157 is III; the sequence is WGVLGQPPNR…LVPPSKAVEF (82 aa). The interval 158-166 is IV (linker domain); the sequence is HQEQQIFIE. The segment at 167–252 is v (Cys-rich); the sequence is AKASKIFNCR…HSDTPYYPSG (86 aa).

Belongs to the neurexophilin family. Post-translationally, may be proteolytically processed at the boundary between the N-terminal non-conserved and the central conserved domain in neuron-like cells. In terms of tissue distribution, highest level in brain, present also in lung, kidney and testis.

It is found in the secreted. Its function is as follows. May be signaling molecules that resemble neuropeptides. Ligand for alpha-neurexins. The polypeptide is Neurexophilin-3 (Nxph3) (Mus musculus (Mouse)).